Reading from the N-terminus, the 1575-residue chain is Ras GTPase-activating-like protein IQGAP2 (1575 aa).

S16 is modified (phosphoserine). The region spanning 41–156 is the Calponin-homology (CH) domain; the sequence is LCHLEEAKRW…YCIHALSLYL (116 aa). T356 carries the post-translational modification Phosphothreonine. Positions 594–627 constitute a WW domain; sequence ESSEGSWVTLNVQEKYNYYYNTDSKEGSWVPPEL. S595 and S599 each carry phosphoserine. IQ domains follow at residues 690–719, 720–749, and 750–779; these read QTES…VFAG, NVDS…YFED, and HKNE…SENP. Phosphothreonine is present on residues T782, T881, T1002, and T1269. The 250-residue stretch at 933–1182 folds into the Ras-GAP domain; sequence YLLLKLFKTA…QEFRKYFQEA (250 aa). A phosphoserine mark is found at S1279 and S1461.

Its function is as follows. Binds to activated CDC42 and RAC1 but does not seem to stimulate their GTPase activity. Associates with calmodulin. The protein is Ras GTPase-activating-like protein IQGAP2 (Iqgap2) of Mus musculus (Mouse).